The primary structure comprises 137 residues: uncharacterized protein (137 aa).

This is an uncharacterized protein from Acidianus convivator (ATV).